The sequence spans 401 residues: Tyrosine--tRNA ligase (401 aa).

The 'HIGH' region signature appears at 42–51 (PTAPDIHLGH). The 'KMSKS' region signature appears at 226–230 (KMSKS). Lys-229 contacts ATP. The S4 RNA-binding domain maps to 334–394 (MGLATLLKEA…GKRKFARVRL (61 aa)).

It belongs to the class-I aminoacyl-tRNA synthetase family. TyrS type 2 subfamily. As to quaternary structure, homodimer.

The protein resides in the cytoplasm. It carries out the reaction tRNA(Tyr) + L-tyrosine + ATP = L-tyrosyl-tRNA(Tyr) + AMP + diphosphate + H(+). Its function is as follows. Catalyzes the attachment of tyrosine to tRNA(Tyr) in a two-step reaction: tyrosine is first activated by ATP to form Tyr-AMP and then transferred to the acceptor end of tRNA(Tyr). The sequence is that of Tyrosine--tRNA ligase from Haemophilus influenzae (strain ATCC 51907 / DSM 11121 / KW20 / Rd).